A 756-amino-acid chain; its full sequence is 5-methyltetrahydropteroyltriglutamate--homocysteine methyltransferase (756 aa).

Residues Arg-16–Lys-19 and Lys-112 contribute to the 5-methyltetrahydropteroyltri-L-glutamate site. L-homocysteine-binding positions include Ile-432–Ser-434 and Glu-485. L-methionine is bound by residues Ile-432 to Ser-434 and Glu-485. Residues Arg-516 to Cys-517 and Trp-562 contribute to the 5-methyltetrahydropteroyltri-L-glutamate site. Residue Asp-600 participates in L-homocysteine binding. Asp-600 provides a ligand contact to L-methionine. A 5-methyltetrahydropteroyltri-L-glutamate-binding site is contributed by Glu-606. His-642, Cys-644, and Glu-666 together coordinate Zn(2+). His-695 (proton donor) is an active-site residue. Cys-727 is a binding site for Zn(2+).

This sequence belongs to the vitamin-B12 independent methionine synthase family. It depends on Zn(2+) as a cofactor.

It carries out the reaction 5-methyltetrahydropteroyltri-L-glutamate + L-homocysteine = tetrahydropteroyltri-L-glutamate + L-methionine. The protein operates within amino-acid biosynthesis; L-methionine biosynthesis via de novo pathway; L-methionine from L-homocysteine (MetE route): step 1/1. Its function is as follows. Catalyzes the transfer of a methyl group from 5-methyltetrahydrofolate to homocysteine resulting in methionine formation. This Haemophilus influenzae (strain PittGG) protein is 5-methyltetrahydropteroyltriglutamate--homocysteine methyltransferase.